Reading from the N-terminus, the 101-residue chain is uncharacterized protein (101 aa).

This is an uncharacterized protein from Bacillus subtilis (strain 168).